The sequence spans 326 residues: Ribosomal large subunit pseudouridine synthase D (326 aa).

Asp144 is an active-site residue.

It belongs to the pseudouridine synthase RluA family.

It is found in the cytoplasm. It catalyses the reaction uridine(1911/1915/1917) in 23S rRNA = pseudouridine(1911/1915/1917) in 23S rRNA. Responsible for synthesis of pseudouridine from uracil at positions 1911, 1915 and 1917 in 23S ribosomal RNA. This Borreliella burgdorferi (strain ATCC 35210 / DSM 4680 / CIP 102532 / B31) (Borrelia burgdorferi) protein is Ribosomal large subunit pseudouridine synthase D.